Consider the following 380-residue polypeptide: Cytochrome b (380 aa).

A run of 4 helical transmembrane segments spans residues 33–53 (FGSLLGMCLMIQILTGLFLAM), 77–98 (WLIRYLHANGASMFFICLFIHV), 113–133 (WNIGIVLLLTTMATAFVGYVL), and 178–198 (FFAFHFILPFIITALVLVHLL). 2 residues coordinate heme b: H83 and H97. Residues H182 and H196 each coordinate heme b. H201 is an a ubiquinone binding site. The next 4 helical transmembrane spans lie at 226–246 (IKDLLGALILLMVLMILVLFF), 288–308 (LGGVLALILSILILATLPLLN), 320–340 (ITQALYWIFVANLLTXTWIGG), and 347–367 (FTLIGXIASXLXFXIIIIFMP).

This sequence belongs to the cytochrome b family. The cytochrome bc1 complex contains 11 subunits: 3 respiratory subunits (MT-CYB, CYC1 and UQCRFS1), 2 core proteins (UQCRC1 and UQCRC2) and 6 low-molecular weight proteins (UQCRH/QCR6, UQCRB/QCR7, UQCRQ/QCR8, UQCR10/QCR9, UQCR11/QCR10 and a cleavage product of UQCRFS1). This cytochrome bc1 complex then forms a dimer. The cofactor is heme b.

Its subcellular location is the mitochondrion inner membrane. Its function is as follows. Component of the ubiquinol-cytochrome c reductase complex (complex III or cytochrome b-c1 complex) that is part of the mitochondrial respiratory chain. The b-c1 complex mediates electron transfer from ubiquinol to cytochrome c. Contributes to the generation of a proton gradient across the mitochondrial membrane that is then used for ATP synthesis. The polypeptide is Cytochrome b (MT-CYB) (Rhipidomys wetzeli (Wetzel's climbing mouse)).